The following is a 103-amino-acid chain: Cysteine-rich and transmembrane domain-containing protein 1 (103 aa).

Pro residues predominate over residues 1 to 45 (MNQGNPPPYPGPGPTAPYPPYPSQPMGPGFYPPGPPGGPYPPPQG). Positions 1-66 (MNQGNPPPYP…WQGGPQEPPK (66 aa)) are disordered. A compositionally biased stretch (low complexity) spans 46-56 (GYPYQGYPQYG). Residues 80–97 (LGTSTCLTACWTALCCCC) form a helical membrane-spanning segment.

Belongs to the CYSTM1 family.

It localises to the membrane. This is Cysteine-rich and transmembrane domain-containing protein 1 (CYSTM1) from Bos taurus (Bovine).